Reading from the N-terminus, the 766-residue chain is Alpha-onocerin synthase LCD (766 aa).

7 PFTB repeats span residues 101 to 143, 151 to 192, 456 to 507, 517 to 558, 594 to 634, 643 to 684, and 705 to 752; these read LCRA…GALD, QREI…RLMG, QESY…STTD, IHEC…PGYK, IQEG…LASG, IQRA…HVVH, and LHRA…WALG. The active-site Proton donor is Asp488.

Belongs to the terpene cyclase/mutase family.

It catalyses the reaction pre-alpha-onocerin = alpha-onocerin. The protein operates within secondary metabolite biosynthesis; terpenoid biosynthesis. Functionally, oxidosqualene cyclase involved in the biosynthesis of alpha-onocerin, a triterpenoid characterized by a symmetrical structure due to cyclizations at both termini of dioxidosqualene that inhibits acetylcholinesterase. Catalyzes the second half of the cyclization, exclusively from pre-alpha-onocerin. In Lycopodium clavatum (Stag's-horn clubmoss), this protein is Alpha-onocerin synthase LCD.